We begin with the raw amino-acid sequence, 293 residues long: 3-methyl-2-oxobutanoate hydroxymethyltransferase (293 aa).

Positions 1–25 are disordered; sequence MTDSPTAGTPYGTLPPASPLPQRRP. Mg(2+)-binding residues include Asp67 and Asp110. Residues 67–68, Asp110, and Lys139 contribute to the 3-methyl-2-oxobutanoate site; that span reads DS. Glu141 contributes to the Mg(2+) binding site. Glu208 (proton acceptor) is an active-site residue.

It belongs to the PanB family. Homodecamer; pentamer of dimers. Mg(2+) serves as cofactor.

The protein resides in the cytoplasm. It catalyses the reaction 3-methyl-2-oxobutanoate + (6R)-5,10-methylene-5,6,7,8-tetrahydrofolate + H2O = 2-dehydropantoate + (6S)-5,6,7,8-tetrahydrofolate. Its pathway is cofactor biosynthesis; (R)-pantothenate biosynthesis; (R)-pantoate from 3-methyl-2-oxobutanoate: step 1/2. Its function is as follows. Catalyzes the reversible reaction in which hydroxymethyl group from 5,10-methylenetetrahydrofolate is transferred onto alpha-ketoisovalerate to form ketopantoate. The chain is 3-methyl-2-oxobutanoate hydroxymethyltransferase from Acidovorax sp. (strain JS42).